Consider the following 357-residue polypeptide: Low-salt glycan biosynthesis nucleotidyltransferase Agl11 (357 aa).

The Mg(2+) site is built by Asp108 and Asp221.

Belongs to the glucose-1-phosphate thymidylyltransferase family. Mg(2+) serves as cofactor.

The protein operates within protein modification; protein glycosylation. It participates in cell surface structure biogenesis; S-layer biogenesis. Its function is as follows. Nucleotidyltransferase involved in N-glycan biosynthetic pathway that takes place under low-salt conditions (1.75 M instead of 3.4 M). Participates in the formation of the tetrasaccharide present at 'Asn-532' of S-layer glycoprotein Csg, consisting of a sulfated hexose, 2 hexoses and rhamnose. Involved in the addition of final rhamnose (sugar 4) of the tetrasaccharide on the dolichol phosphate carrier. The chain is Low-salt glycan biosynthesis nucleotidyltransferase Agl11 (agl11) from Haloferax volcanii (strain ATCC 29605 / DSM 3757 / JCM 8879 / NBRC 14742 / NCIMB 2012 / VKM B-1768 / DS2) (Halobacterium volcanii).